We begin with the raw amino-acid sequence, 393 residues long: Ninja-family protein 1 (393 aa).

2 disordered regions span residues 1 to 27 (MEGF…PGQL) and 155 to 200 (NDDW…KEMN). Positions 156–170 (DDWKKRKEAQSLKRL) are enriched in basic and acidic residues.

It belongs to the Ninja family.

Its subcellular location is the nucleus. This chain is Ninja-family protein 1, found in Zea mays (Maize).